Reading from the N-terminus, the 417-residue chain is Tumor necrosis factor receptor superfamily member 25 (417 aa).

The N-terminal stretch at 1 to 24 (MEQRPRGCAAVAAALLLVLLGARA) is a signal peptide. The Extracellular segment spans residues 25–199 (QGGTRSPRCD…RCAAVCGWRQ (175 aa)). TNFR-Cys repeat units lie at residues 34 to 71 (DCAGDFHKKIGLFCCRGCPAGHYLKAPCTEPCGNSTCL), 72 to 115 (VCPQ…DTRC), 116 to 163 (GCKP…TDCG), and 164 to 192 (TCLPGFYEHGDGCVSCPTSTLGSCPERCA). 12 disulfide bridges follow: cysteine 35/cysteine 47, cysteine 48/cysteine 61, cysteine 51/cysteine 70, cysteine 73/cysteine 89, cysteine 92/cysteine 107, cysteine 95/cysteine 115, cysteine 117/cysteine 130, cysteine 138/cysteine 155, cysteine 141/cysteine 162, cysteine 165/cysteine 176, cysteine 179/cysteine 191, and cysteine 187/cysteine 195. N-linked (GlcNAc...) asparagine glycosylation is present at asparagine 67. N-linked (GlcNAc...) asparagine glycosylation occurs at asparagine 106. A helical transmembrane segment spans residues 200–220 (MFWVQVLLAGLVVPLLLGATL). The Cytoplasmic portion of the chain corresponds to 221–417 (TYTYRHCWPH…DLRSRLQRGP (197 aa)). Residues 332–413 (GPQLYDVMDA…GCVEDLRSRL (82 aa)) enclose the Death domain. Arginine 352 carries a (Microbial infection) N-beta-linked (GlcNAc) arginine glycan.

In terms of assembly, homodimer. Interacts strongly via the death domains with TNFRSF1 and TRADD to activate at least two distinct signaling cascades, apoptosis and NF-kappa-B signaling. Interacts with BAG4. Post-translationally, (Microbial infection) Glycosylated at Arg-352 by enteropathogenic E.coli protein NleB1. In terms of processing, glycosylated. As to expression, abundantly expressed in thymocytes and lymphocytes. Detected in lymphocyte-rich tissues such as thymus, colon, intestine, and spleen. Also found in the prostate.

The protein localises to the cell membrane. Its subcellular location is the secreted. Its function is as follows. Receptor for TNFSF12/APO3L/TWEAK. Interacts directly with the adapter TRADD. Mediates activation of NF-kappa-B and induces apoptosis. May play a role in regulating lymphocyte homeostasis. The protein is Tumor necrosis factor receptor superfamily member 25 (TNFRSF25) of Homo sapiens (Human).